The sequence spans 339 residues: UDP-N-acetylglucosamine--N-acetylmuramyl-(pentapeptide) pyrophosphoryl-undecaprenol N-acetylglucosamine transferase (339 aa).

UDP-N-acetyl-alpha-D-glucosamine-binding positions include 11–13, N127, R170, S188, I235, and Q280; that span reads TGG.

It belongs to the glycosyltransferase 28 family. MurG subfamily.

The protein localises to the cell inner membrane. It carries out the reaction di-trans,octa-cis-undecaprenyl diphospho-N-acetyl-alpha-D-muramoyl-L-alanyl-D-glutamyl-meso-2,6-diaminopimeloyl-D-alanyl-D-alanine + UDP-N-acetyl-alpha-D-glucosamine = di-trans,octa-cis-undecaprenyl diphospho-[N-acetyl-alpha-D-glucosaminyl-(1-&gt;4)]-N-acetyl-alpha-D-muramoyl-L-alanyl-D-glutamyl-meso-2,6-diaminopimeloyl-D-alanyl-D-alanine + UDP + H(+). Its pathway is cell wall biogenesis; peptidoglycan biosynthesis. Cell wall formation. Catalyzes the transfer of a GlcNAc subunit on undecaprenyl-pyrophosphoryl-MurNAc-pentapeptide (lipid intermediate I) to form undecaprenyl-pyrophosphoryl-MurNAc-(pentapeptide)GlcNAc (lipid intermediate II). The chain is UDP-N-acetylglucosamine--N-acetylmuramyl-(pentapeptide) pyrophosphoryl-undecaprenol N-acetylglucosamine transferase from Thermotoga maritima (strain ATCC 43589 / DSM 3109 / JCM 10099 / NBRC 100826 / MSB8).